Consider the following 149-residue polypeptide: Deoxyuridine 5'-triphosphate nucleotidohydrolase (149 aa).

Substrate is bound by residues 68-70, Asn-81, and 85-87; these read RSG and LID.

This sequence belongs to the dUTPase family. It depends on Mg(2+) as a cofactor.

The catalysed reaction is dUTP + H2O = dUMP + diphosphate + H(+). Its pathway is pyrimidine metabolism; dUMP biosynthesis; dUMP from dCTP (dUTP route): step 2/2. This enzyme is involved in nucleotide metabolism: it produces dUMP, the immediate precursor of thymidine nucleotides and it decreases the intracellular concentration of dUTP so that uracil cannot be incorporated into DNA. This is Deoxyuridine 5'-triphosphate nucleotidohydrolase from Azoarcus sp. (strain BH72).